The sequence spans 745 residues: Cellulose synthase 1 catalytic subunit [UDP-forming] (745 aa).

Helical transmembrane passes span 29-49 (YVVG…TLSL), 106-126 (GILG…LFLS), and 153-173 (IFIP…LGAL). The catalytic subdomain A stretch occupies residues 147 to 240 (EWPTVDIFIP…HILILDCDHI (94 aa)). Asp-189 is an active-site residue. Substrate-binding residues include Asp-236 and Asp-238. Residues 317–377 (KAIEEIGGFA…GQRMRWARGM (61 aa)) are catalytic subdomain B. Asp-333 is a catalytic residue. 6 consecutive transmembrane segments (helical) span residues 407 to 427 (FFFA…LFFS), 430 to 450 (IIAA…FHSI), 468 to 488 (VYET…MLFP), 515 to 535 (NIIF…ALIF), 547 to 567 (ALNC…ISVG), and 649 to 669 (AVFT…RFVF). Residues 572–670 (QLRQSHRIEA…EAAVVRFVFG (99 aa)) enclose the PilZ domain. The span at 708–717 (IAHSRPKKKP) shows a compositional bias: basic residues. The disordered stretch occupies residues 708-745 (IAHSRPKKKPIALPVERREPTTSQGGQKQEGKISRAAS). The segment covering 736-745 (QEGKISRAAS) has biased composition (basic and acidic residues).

It belongs to the glycosyltransferase 2 family. Mg(2+) serves as cofactor.

It localises to the cell inner membrane. The enzyme catalyses [(1-&gt;4)-beta-D-glucosyl](n) + UDP-alpha-D-glucose = [(1-&gt;4)-beta-D-glucosyl](n+1) + UDP + H(+). Its pathway is glycan metabolism; bacterial cellulose biosynthesis. Its activity is regulated as follows. Activated by bis-(3'-5') cyclic diguanylic acid (c-di-GMP). Functionally, catalytic subunit of cellulose synthase. It polymerizes uridine 5'-diphosphate glucose to cellulose. The thick cellulosic mats generated by this enzyme probably provide a specialized protective environment to the bacterium. This Komagataeibacter xylinus (Gluconacetobacter xylinus) protein is Cellulose synthase 1 catalytic subunit [UDP-forming] (bcsAI).